Consider the following 1197-residue polypeptide: DNA-directed RNA polymerase subunit beta (1197 aa).

The protein belongs to the RNA polymerase beta chain family. The RNAP catalytic core consists of 2 alpha, 1 beta, 1 beta' and 1 omega subunit. When a sigma factor is associated with the core the holoenzyme is formed, which can initiate transcription.

It catalyses the reaction RNA(n) + a ribonucleoside 5'-triphosphate = RNA(n+1) + diphosphate. DNA-dependent RNA polymerase catalyzes the transcription of DNA into RNA using the four ribonucleoside triphosphates as substrates. This Streptococcus pyogenes serotype M12 (strain MGAS9429) protein is DNA-directed RNA polymerase subunit beta.